Here is an 828-residue protein sequence, read N- to C-terminus: Outer membrane usher protein PmfC (828 aa).

Residues 1 to 28 (MLIPYSPHTIWKTICATLLLSLAFFSQA) form the signal peptide.

The protein belongs to the fimbrial export usher family.

The protein resides in the cell outer membrane. Functionally, involved in the export and assembly of PMF fimbrial subunits across the outer membrane. The polypeptide is Outer membrane usher protein PmfC (pmfC) (Proteus mirabilis (strain HI4320)).